The primary structure comprises 82 residues: Small ribosomal subunit protein bS16 (82 aa).

The protein belongs to the bacterial ribosomal protein bS16 family.

This is Small ribosomal subunit protein bS16 from Vibrio atlanticus (strain LGP32) (Vibrio splendidus (strain Mel32)).